An 88-amino-acid chain; its full sequence is Transcription factor ILI5 (88 aa).

Positions 1-54 constitute a bHLH domain; it reads MSSRRSSRGSISEEEINELISKLQSLLPNSRRRGSSQASTTKLLKETCNYIKSL.

It belongs to the bHLH protein family. As to quaternary structure, interacts with APG.

It is found in the nucleus. Its function is as follows. Atypical and probable non DNA-binding bHLH transcription factor that acts as a positive regulator of grain size. Binds the transcription repressor APG and forms a heterodimer of antagonistic basic helix-loop-helix transcription factors that regulates grain length and weight by controlling cell elongation in lemma and palea. The protein is Transcription factor ILI5 (ILI5) of Oryza sativa subsp. indica (Rice).